A 1279-amino-acid chain; its full sequence is ATP-dependent helicase/nuclease subunit A (1279 aa).

Residues 4 to 499 (TKWTDEQRQA…VKLFKNFRSR (496 aa)) enclose the UvrD-like helicase ATP-binding domain. 25–32 (AGAGAGKT) serves as a coordination point for ATP. Residues 526–853 (EEALKVGASY…RIMSIHKSKG (328 aa)) form the UvrD-like helicase C-terminal domain.

Belongs to the helicase family. AddA subfamily. As to quaternary structure, heterodimer of AddA and AddB/RexB. It depends on Mg(2+) as a cofactor.

It carries out the reaction Couples ATP hydrolysis with the unwinding of duplex DNA by translocating in the 3'-5' direction.. The catalysed reaction is ATP + H2O = ADP + phosphate + H(+). Its function is as follows. The heterodimer acts as both an ATP-dependent DNA helicase and an ATP-dependent, dual-direction single-stranded exonuclease. Recognizes the chi site generating a DNA molecule suitable for the initiation of homologous recombination. The AddA nuclease domain is required for chi fragment generation; this subunit has the helicase and 3' -&gt; 5' nuclease activities. This is ATP-dependent helicase/nuclease subunit A from Clostridium botulinum (strain Okra / Type B1).